An 89-amino-acid chain; its full sequence is Small ribosomal subunit protein uS15 (89 aa).

It belongs to the universal ribosomal protein uS15 family. Part of the 30S ribosomal subunit. Forms a bridge to the 50S subunit in the 70S ribosome, contacting the 23S rRNA.

One of the primary rRNA binding proteins, it binds directly to 16S rRNA where it helps nucleate assembly of the platform of the 30S subunit by binding and bridging several RNA helices of the 16S rRNA. Functionally, forms an intersubunit bridge (bridge B4) with the 23S rRNA of the 50S subunit in the ribosome. This chain is Small ribosomal subunit protein uS15, found in Photorhabdus luminescens (Xenorhabdus luminescens).